The primary structure comprises 106 residues: UPF0213 protein VPA1222 (106 aa).

The GIY-YIG domain occupies 7–82; the sequence is QHWSVYLIRN…KQLTKSKKEQ (76 aa).

Belongs to the UPF0213 family.

This Vibrio parahaemolyticus serotype O3:K6 (strain RIMD 2210633) protein is UPF0213 protein VPA1222.